A 428-amino-acid polypeptide reads, in one-letter code: Histone-lysine N-methyltransferase SMYD3 (428 aa).

An N-acetylmethionine modification is found at methionine 1. Residues 4-240 (LKVEKFTTAN…AGEELTICYL (237 aa)) form the SET domain. S-adenosyl-L-methionine is bound at residue 14–16 (RGN). 8 residues coordinate Zn(2+): cysteine 49, cysteine 52, cysteine 62, cysteine 65, cysteine 71, cysteine 75, histidine 83, and cysteine 87. The MYND-type zinc finger occupies 49–87 (CDRCLLGKEKLMRCSQCRIAKYCSAKCQKKAWPDHRREC). S-adenosyl-L-methionine-binding positions include tyrosine 124, asparagine 132, 205–206 (NH), tyrosine 239, and phenylalanine 259. Residues 272–428 (DADMLTGDEQ…EECDANIRAS (157 aa)) form a C-terminal domain; essential for histone methyltransferase activity, nuclear localization and mediates interaction with HSP90AA1 region.

Belongs to the class V-like SAM-binding methyltransferase superfamily. Histone-lysine methyltransferase family. In terms of assembly, interacts with HSPCA. Interacts with HELZ. Interacts with POLR2A; the interaction may be indirect and may be mediated by HELZ. Interacts with HSP90AA1; this interaction enhances SMYD3 histone-lysine N-methyltransferase.

Its subcellular location is the cytoplasm. The protein resides in the nucleus. The enzyme catalyses L-lysyl(4)-[histone H3] + 3 S-adenosyl-L-methionine = N(6),N(6),N(6)-trimethyl-L-lysyl(4)-[histone H3] + 3 S-adenosyl-L-homocysteine + 3 H(+). Histone methyltransferase activity strongly stimulated by HSPCA. Histone methyltransferase. Specifically methylates 'Lys-4' of histone H3, inducing di- and tri-methylation, but not monomethylation. Also methylates 'Lys-5' of histone H4. Plays an important role in transcriptional activation as a member of an RNA polymerase complex. Binds DNA containing 5'-CCCTCC-3' or 5'-GAGGGG-3' sequences. This chain is Histone-lysine N-methyltransferase SMYD3 (Smyd3), found in Mus musculus (Mouse).